The following is a 64-amino-acid chain: PYLa/PGLa B (64 aa).

The signal sequence occupies residues 1-20; that stretch reads MYKQIFLCLIIAALCATIMA. Positions 21–35 are excised as a propeptide; that stretch reads EASALADADDDDDKR. A Leucine amide modification is found at Leu59. Residues 60-64 constitute a propeptide that is removed on maturation; the sequence is GRRDS.

This sequence belongs to the gastrin/cholecystokinin family. Magainin subfamily. Expressed by the skin glands. Synthesized in the stomach and stored in a novel granular multinucleated cell in the gastric mucosa. Stored as active, processed peptides in large granules within the granular gland secretions of the skin.

The protein localises to the secreted. In terms of biological role, PGLa and PGLa-H display a broad-spectrum of antibacterial activity against a range of Gram-positive and Gram-negative bacteria. PGLa also displays antifungal activity against C.albicans ATCC 14053. PGLa-H shows moderate antibacterial activity against the multidrug-resistant methicillin-resistant S.aureus (MRSA) but exhibits very little hemolytic activity. This chain is PYLa/PGLa B (pgla-b), found in Xenopus laevis (African clawed frog).